A 368-amino-acid chain; its full sequence is Branched-chain-amino-acid aminotransferase (368 aa).

Position 101 (arginine 101) interacts with pyridoxal 5'-phosphate. At lysine 204 the chain carries N6-(pyridoxal phosphate)lysine. Pyridoxal 5'-phosphate-binding positions include tyrosine 209, 271–272 (IT), and threonine 314.

It belongs to the class-IV pyridoxal-phosphate-dependent aminotransferase family. As to quaternary structure, homodimer. Pyridoxal 5'-phosphate serves as cofactor.

The enzyme catalyses L-leucine + 2-oxoglutarate = 4-methyl-2-oxopentanoate + L-glutamate. It catalyses the reaction L-isoleucine + 2-oxoglutarate = (S)-3-methyl-2-oxopentanoate + L-glutamate. The catalysed reaction is L-valine + 2-oxoglutarate = 3-methyl-2-oxobutanoate + L-glutamate. Its pathway is amino-acid biosynthesis; L-isoleucine biosynthesis; L-isoleucine from 2-oxobutanoate: step 4/4. It functions in the pathway amino-acid biosynthesis; L-leucine biosynthesis; L-leucine from 3-methyl-2-oxobutanoate: step 4/4. It participates in amino-acid biosynthesis; L-valine biosynthesis; L-valine from pyruvate: step 4/4. Catalyzes the reversible transfers of an amino group from glutamate to the alpha-ketoacid of the respective amino acid in the final step in the biosynthesis of branchedchain amino acids. The chain is Branched-chain-amino-acid aminotransferase (ilvE) from Mycobacterium tuberculosis (strain CDC 1551 / Oshkosh).